The following is a 508-amino-acid chain: MQAALVILDGWGLGDHDRRDAVRAADTPTFDEYAERGAFGTLTTSGRDVGLPDGQMGNSEVGHLTIGAGRVVKQAYTRIEDAIAAGDLCGNDAISGALDHVADTGGTLHVMGLVSDGGVHADQQHIHALVECAAGRGVEAAVHAFTDGRDTSPTGGEDYLADLEAVADEHGTGDVASVSGRYYAMDRDQNWARTKRAYDAITRSDGVAHHAAAAVDAVTDSYERGDTDEFVEPTTIEGGAALSDGDAVVFANFRADRARQLTRLLADIHPADWDADGIETNPPAVPVVTMTEYDETFDCPVAFPAAEPTDTLGAVLAAHDHTQLRVAESEKYAHVTYFLNGGREVAFDGETRTIVDSPDVPTYDEQPAMSAPAVTDTVLDALAGDDPDVLVLNYANPDMVGHTGDFDAAIEAVEAVDRELGRLVPALNDAGAHAFLTADHGNADDLGTPADPHTAHTFNPVPFVSLPPASGDTAAVRDGGALRDIAPTLLDVLGIDRPTVMTGASLLE.

The Mn(2+) site is built by aspartate 9 and serine 59. The Phosphoserine intermediate role is filled by serine 59. Residues histidine 120, arginine 149–aspartate 150, arginine 181, arginine 187, arginine 254–arginine 257, and lysine 331 contribute to the substrate site. Aspartate 398, histidine 402, aspartate 439, histidine 440, and histidine 456 together coordinate Mn(2+).

This sequence belongs to the BPG-independent phosphoglycerate mutase family. It depends on Mn(2+) as a cofactor.

The catalysed reaction is (2R)-2-phosphoglycerate = (2R)-3-phosphoglycerate. It functions in the pathway carbohydrate degradation; glycolysis; pyruvate from D-glyceraldehyde 3-phosphate: step 3/5. Its function is as follows. Catalyzes the interconversion of 2-phosphoglycerate and 3-phosphoglycerate. This chain is 2,3-bisphosphoglycerate-independent phosphoglycerate mutase, found in Halobacterium salinarum (strain ATCC 700922 / JCM 11081 / NRC-1) (Halobacterium halobium).